Consider the following 165-residue polypeptide: Deoxyuridine 5'-triphosphate nucleotidohydrolase (165 aa).

It belongs to the dUTPase family. Homotrimer. Mg(2+) is required as a cofactor.

It is found in the host cytoplasm. Its subcellular location is the virion. It catalyses the reaction dUTP + H2O = dUMP + diphosphate + H(+). The viral dUTPase may play a role in lowering the dUTP concentration in natural infections to minimize misincorporation of deoxyuridine into the viral DNA and ensure the fidelity of genome replication. This African swine fever virus (isolate Tick/South Africa/Pretoriuskop Pr4/1996) (ASFV) protein is Deoxyuridine 5'-triphosphate nucleotidohydrolase.